We begin with the raw amino-acid sequence, 786 residues long: E3 ubiquitin-protein ligase UHRF1 (786 aa).

In terms of domain architecture, Ubiquitin-like spans 1 to 78 (MWIQVRTMDG…IQLLVRQSLV (78 aa)). 3 positions are modified to phosphoserine: Ser-76, Ser-98, and Ser-102. The segment at 82-134 (PVPSSSGGSKERDSELSDTDSGCGLAQSESDKSSNSGEAANEPEGKADEDECD) is disordered. Tudor-like stretches follow at residues 139 to 213 (GLYK…ARAR) and 220 to 287 (DLQV…IERP). Residue Lys-283 forms a Glycyl lysine isopeptide (Lys-Gly) (interchain with G-Cter in SUMO2) linkage. The tract at residues 300–305 (RKSGPS) is linker. At Ser-302 the chain carries Phosphoserine; by PKA. The PHD-type zinc-finger motif lies at 303 to 370 (GPSCKHCKDD…EWYCPDCRID (68 aa)). 2 histone H3R2me0 binding regions span residues 337–341 (CDECD) and 357–359 (PPE). Ser-372 carries the phosphoserine modification. Residue Lys-389 forms a Glycyl lysine isopeptide (Lys-Gly) (interchain with G-Cter in SUMO2) linkage. Lys-403 bears the N6-acetyllysine mark. The YDG domain occupies 423–586 (GPIPGIPVGT…FLVWRFLLRR (164 aa)). Residues 449 to 450 (HV) are required to promote base flipping. DNA contacts are provided by residues 467 to 468 (AG) and Asp-473. Required for formation of a 5-methylcytosine-binding pocket stretches follow at residues 470 to 473 (YEDD) and 482 to 485 (YTGS). Lys-550 carries the N6-acetyllysine; alternate modification. Lys-550 is covalently cross-linked (Glycyl lysine isopeptide (Lys-Gly) (interchain with G-Cter in SUMO2); alternate). A disordered region spans residues 626-679 (NSKQAALDKEEEDGEEGFTSPRKGKRKSKSAGGDGSSRGTPKKTKVEPYSLTTQ). At Ser-645 the chain carries Phosphoserine; by CDK1. A phosphoserine mark is found at Ser-655 and Ser-662. A Glycyl lysine isopeptide (Lys-Gly) (interchain with G-Cter in SUMO2) cross-link involves residue Lys-670. The segment at 717–756 (CICCQELVFRPITTVCQHNVCKDCLDRSFKAQVFSCPACR) adopts an RING-type zinc-finger fold.

Interacts with DNMT3A and DNMT3B. Interacts with DNMT1; the interaction is direct. Interacts with USP7; leading to its deubiquitination. Interacts with histone H3. Interacts with HDAC1, but not with HDAC2. Interacts with BLTP3A. Interacts with PML. Interacts with EHMT2. Binds methylated CpG containing oligonucleotides. Interacts with ZNF263; recruited to the SIX3 promoter along with other proteins involved in chromatin modification and transcriptional corepression where it contributes to transcriptional repression. Interacts with UHRF2. Interacts with FANCD2. Interacts with TET1 isoform 2; this interaction induces the recruitment of TET1 isoform 2 to replicating heterochromatin. Phosphorylation at Ser-302 of the linker region decreases the binding to H3K9me3. Phosphorylation at Ser-645 by CDK1 during M phase impairs interaction with USP7, preventing deubiquitination and leading to degradation by the proteasome. In terms of processing, ubiquitinated; which leads to proteasomal degradation. Autoubiquitinated; interaction with USP7 leads to deubiquitination and prevents degradation. Ubiquitination and degradation takes place during M phase, when phosphorylation at Ser-645 prevents interaction with USP7 and subsequent deubiquitination. Polyubiquitination may be stimulated by DNA damage.

The protein resides in the nucleus. It carries out the reaction S-ubiquitinyl-[E2 ubiquitin-conjugating enzyme]-L-cysteine + [acceptor protein]-L-lysine = [E2 ubiquitin-conjugating enzyme]-L-cysteine + N(6)-ubiquitinyl-[acceptor protein]-L-lysine.. Its pathway is protein modification; protein ubiquitination. In terms of biological role, multidomain protein that acts as a key epigenetic regulator by bridging DNA methylation and chromatin modification. Specifically recognizes and binds hemimethylated DNA at replication forks via its YDG domain and recruits DNMT1 methyltransferase to ensure faithful propagation of the DNA methylation patterns through DNA replication. In addition to its role in maintenance of DNA methylation, also plays a key role in chromatin modification: through its tudor-like regions and PHD-type zinc fingers, specifically recognizes and binds histone H3 trimethylated at 'Lys-9' (H3K9me3) and unmethylated at 'Arg-2' (H3R2me0), respectively, and recruits chromatin proteins. Enriched in pericentric heterochromatin where it recruits different chromatin modifiers required for this chromatin replication. Also localizes to euchromatic regions where it negatively regulates transcription possibly by impacting DNA methylation and histone modifications. Has E3 ubiquitin-protein ligase activity by mediating the ubiquitination of target proteins such as histone H3 and PML. It is still unclear how E3 ubiquitin-protein ligase activity is related to its role in chromatin in vivo. Plays a role in DNA repair by cooperating with UHRF2 to ensure recruitment of FANCD2 to interstrand cross-links (ICLs) leading to FANCD2 activation. Plays a pivotal role in the establishment of correct spindle architecture by catalyzing the 'Lys-63'-linked ubiquitination of KIF11, thereby controlling KIF11 localization on the spindle. The polypeptide is E3 ubiquitin-protein ligase UHRF1 (UHRF1) (Bos taurus (Bovine)).